We begin with the raw amino-acid sequence, 952 residues long: RNA polymerase-associated protein RapA (952 aa).

The Helicase ATP-binding domain occupies 164-334 (EVGRRYAPRV…FARLRLLDPD (171 aa)). 177-184 (DEVGLGKT) serves as a coordination point for ATP. The DEAH box signature appears at 280–283 (DEAH). The 177-residue stretch at 492–668 (RVNWLLELLK…GKSDGLESLI (177 aa)) folds into the Helicase C-terminal domain.

This sequence belongs to the SNF2/RAD54 helicase family. RapA subfamily. As to quaternary structure, interacts with the RNAP. Has a higher affinity for the core RNAP than for the holoenzyme. Its ATPase activity is stimulated by binding to RNAP.

In terms of biological role, transcription regulator that activates transcription by stimulating RNA polymerase (RNAP) recycling in case of stress conditions such as supercoiled DNA or high salt concentrations. Probably acts by releasing the RNAP, when it is trapped or immobilized on tightly supercoiled DNA. Does not activate transcription on linear DNA. Probably not involved in DNA repair. The chain is RNA polymerase-associated protein RapA from Aliivibrio fischeri (strain ATCC 700601 / ES114) (Vibrio fischeri).